The following is a 361-amino-acid chain: Molybdenum import ATP-binding protein ModC (361 aa).

The ABC transporter domain occupies 1 to 228 (MLTINIEKQL…EQMRPWVPLQ (228 aa)). 31 to 38 (GRSGAGKT) provides a ligand contact to ATP. The region spanning 289–356 (RSSIRNVLKG…IKGVTMTQMD (68 aa)) is the Mop domain.

The protein belongs to the ABC transporter superfamily. Molybdate importer (TC 3.A.1.8) family. In terms of assembly, the complex is composed of two ATP-binding proteins (ModC), two transmembrane proteins (ModB) and a solute-binding protein (ModA).

It is found in the cell inner membrane. The catalysed reaction is molybdate(out) + ATP + H2O = molybdate(in) + ADP + phosphate + H(+). In terms of biological role, part of the ABC transporter complex ModABC involved in molybdenum import. Responsible for energy coupling to the transport system. In Shewanella oneidensis (strain ATCC 700550 / JCM 31522 / CIP 106686 / LMG 19005 / NCIMB 14063 / MR-1), this protein is Molybdenum import ATP-binding protein ModC.